The sequence spans 145 residues: Small ribosomal subunit protein uS12 (145 aa).

It belongs to the universal ribosomal protein uS12 family. In terms of assembly, part of the 30S ribosomal subunit.

Functionally, with S4 and S5 plays an important role in translational accuracy. Located at the interface of the 30S and 50S subunits. The protein is Small ribosomal subunit protein uS12 of Cenarchaeum symbiosum (strain A).